We begin with the raw amino-acid sequence, 238 residues long: DNA damage-regulated autophagy modulator protein 1 (238 aa).

6 consecutive transmembrane segments (helical) span residues 9-29, 53-73, 91-111, 116-136, 161-181, and 200-220; these read AFVPFLLVTWSSAAFIISYVV, SGIFGFMINFSAFLGAATMYT, VFNLVSLALGLVGCIGMGIVA, LAVPVVHDGGALLAFVCGVVY, MAISAVSCAAVVPMIACASLI, and VSAICEWTVAFGFIFYFLTFI.

The protein belongs to the DRAM/TMEM150 family.

The protein resides in the lysosome membrane. Functionally, lysosomal modulator of autophagy that plays a central role in p53/TP53-mediated apoptosis. Not involved in p73/TP73-mediated autophagy. The polypeptide is DNA damage-regulated autophagy modulator protein 1 (Dram1) (Mus musculus (Mouse)).